The following is a 1264-amino-acid chain: Ubiquitin carboxyl-terminal hydrolase usp-48 (1264 aa).

In terms of domain architecture, USP spans 108–430 (AGLINGGNFC…ACYGLLYRRR (323 aa)). The active-site Nucleophile is the Cys117. His366 (proton acceptor) is an active-site residue. Disordered regions lie at residues 390 to 415 (IPKP…KEKY), 522 to 610 (AKGE…IMDT), and 630 to 679 (TVEV…PVSS). Composition is skewed to basic and acidic residues over residues 403–415 (KTEK…KEKY) and 532–543 (EASENEEKKKNE). Residues 516-547 (AQEYEVAKGEKKKKKKEASENEEKKKNEEDEA) are a coiled coil. The segment covering 565–575 (SEPSTSAAATE) has biased composition (low complexity). Composition is skewed to polar residues over residues 587–599 (ETPN…STQV) and 663–678 (NGTN…QPVS).

Belongs to the peptidase C19 family. As to expression, broadly expressed. Expressed in germline.

It localises to the nucleus. Its subcellular location is the chromosome. The catalysed reaction is Thiol-dependent hydrolysis of ester, thioester, amide, peptide and isopeptide bonds formed by the C-terminal Gly of ubiquitin (a 76-residue protein attached to proteins as an intracellular targeting signal).. Recognizes and hydrolyzes the peptide bond at the C-terminal Gly of ubiquitin. Involved in the processing of poly-ubiquitin precursors as well as that of ubiquitinated proteins. Required post-developmentally to restrict the plasticity of epidermal cells, probably by regulating gene expression. The protein is Ubiquitin carboxyl-terminal hydrolase usp-48 of Caenorhabditis elegans.